The following is a 193-amino-acid chain: dCTP deaminase, dUMP-forming (193 aa).

DCTP-binding positions include 101–106, aspartate 119, 127–129, glutamine 148, tyrosine 162, and glutamine 174; these read KSSLGR and TLE. Glutamate 129 functions as the Proton donor/acceptor in the catalytic mechanism. Positions 161–184 are disordered; that stretch reads PYGSETTGSHYQGQRGPTPSRSYQ.

The protein belongs to the dCTP deaminase family. In terms of assembly, homotrimer.

It carries out the reaction dCTP + 2 H2O = dUMP + NH4(+) + diphosphate. The protein operates within pyrimidine metabolism; dUMP biosynthesis; dUMP from dCTP: step 1/1. Its function is as follows. Bifunctional enzyme that catalyzes both the deamination of dCTP to dUTP and the hydrolysis of dUTP to dUMP without releasing the toxic dUTP intermediate. This Bifidobacterium animalis subsp. lactis (strain AD011) protein is dCTP deaminase, dUMP-forming.